The sequence spans 648 residues: 5-aminolevulinate synthase, mitochondrial (648 aa).

The transit peptide at 1–26 (MEALLQQSRAMCPFLKRSSPNTLRSL) directs the protein to the mitochondrion. The tract at residues 69–109 (KRFTSSAAGVPGAGAGTPKPTRGSPGKRALHSTGGNGANMS) is disordered. Arg170, Ser283, and Lys302 together coordinate substrate. Residues Ser335, His363, and Thr409 each contribute to the pyridoxal 5'-phosphate site. Lys412 is a catalytic residue. At Lys412 the chain carries N6-(pyridoxal phosphate)lysine. Pyridoxal 5'-phosphate is bound by residues Thr441 and Thr442. Residue Thr527 participates in substrate binding.

This sequence belongs to the class-II pyridoxal-phosphate-dependent aminotransferase family. In terms of assembly, homodimer. Requires pyridoxal 5'-phosphate as cofactor.

It is found in the mitochondrion matrix. The catalysed reaction is succinyl-CoA + glycine + H(+) = 5-aminolevulinate + CO2 + CoA. The protein operates within porphyrin-containing compound metabolism; protoporphyrin-IX biosynthesis; 5-aminolevulinate from glycine: step 1/1. Its function is as follows. Catalyzes the synthesis of 5-aminolevulinate (ALA) from succinyl-CoA and glycine, the first and rate-limiting step in heme biosynthesis. In Emericella nidulans (strain FGSC A4 / ATCC 38163 / CBS 112.46 / NRRL 194 / M139) (Aspergillus nidulans), this protein is 5-aminolevulinate synthase, mitochondrial (hemA).